Consider the following 244-residue polypeptide: Ribonuclease 3 (244 aa).

Residues 17–146 enclose the RNase III domain; that stretch reads FEKKMQELNL…FVGALYLDQG (130 aa). Residue glutamate 59 participates in Mg(2+) binding. Aspartate 63 is a catalytic residue. Aspartate 132 and glutamate 135 together coordinate Mg(2+). Residue glutamate 135 is part of the active site. Residues 172 to 241 enclose the DRBM domain; sequence DFKTQFQEYV…AERAYKILKN (70 aa).

Belongs to the ribonuclease III family. In terms of assembly, homodimer. The cofactor is Mg(2+).

The protein resides in the cytoplasm. The enzyme catalyses Endonucleolytic cleavage to 5'-phosphomonoester.. Its function is as follows. Digests double-stranded RNA. Involved in the processing of primary rRNA transcript to yield the immediate precursors to the large and small rRNAs (23S and 16S). Processes some mRNAs, and tRNAs when they are encoded in the rRNA operon. Processes pre-crRNA and tracrRNA of type II CRISPR loci if present in the organism. The chain is Ribonuclease 3 from Staphylococcus saprophyticus subsp. saprophyticus (strain ATCC 15305 / DSM 20229 / NCIMB 8711 / NCTC 7292 / S-41).